A 469-amino-acid polypeptide reads, in one-letter code: Argininosuccinate lyase (469 aa).

It belongs to the lyase 1 family. Argininosuccinate lyase subfamily.

The protein localises to the cytoplasm. The enzyme catalyses 2-(N(omega)-L-arginino)succinate = fumarate + L-arginine. It functions in the pathway amino-acid biosynthesis; L-arginine biosynthesis; L-arginine from L-ornithine and carbamoyl phosphate: step 3/3. The sequence is that of Argininosuccinate lyase from Burkholderia lata (strain ATCC 17760 / DSM 23089 / LMG 22485 / NCIMB 9086 / R18194 / 383).